Here is a 120-residue protein sequence, read N- to C-terminus: MFLLYEYDIFWAFLIISSLIPILVFFISGFLAPISKGPEKLSSYESGIEPIGDAWLQFRIRYYMFALVFVVFDVETVFLYPWAMSFDVLGVSVFVEALIFVLILIVGLVYAWRKGALEWS.

The next 3 helical transmembrane spans lie at 9–29 (IFWA…FISG), 64–84 (MFAL…PWAM), and 88–108 (VLGV…IVGL).

This sequence belongs to the complex I subunit 3 family. In terms of assembly, NDH is composed of at least 16 different subunits, 5 of which are encoded in the nucleus.

Its subcellular location is the plastid. It localises to the chloroplast thylakoid membrane. It catalyses the reaction a plastoquinone + NADH + (n+1) H(+)(in) = a plastoquinol + NAD(+) + n H(+)(out). The catalysed reaction is a plastoquinone + NADPH + (n+1) H(+)(in) = a plastoquinol + NADP(+) + n H(+)(out). In terms of biological role, NDH shuttles electrons from NAD(P)H:plastoquinone, via FMN and iron-sulfur (Fe-S) centers, to quinones in the photosynthetic chain and possibly in a chloroplast respiratory chain. The immediate electron acceptor for the enzyme in this species is believed to be plastoquinone. Couples the redox reaction to proton translocation, and thus conserves the redox energy in a proton gradient. The protein is NAD(P)H-quinone oxidoreductase subunit 3, chloroplastic of Lactuca sativa (Garden lettuce).